Reading from the N-terminus, the 337-residue chain is tRNA N6-adenosine threonylcarbamoyltransferase (337 aa).

2 residues coordinate Fe cation: His111 and His115. Substrate-binding positions include Leu134 to Gly138, Asp167, Gly180, and Asn272. Asp300 lines the Fe cation pocket.

The protein belongs to the KAE1 / TsaD family. It depends on Fe(2+) as a cofactor.

It localises to the cytoplasm. The catalysed reaction is L-threonylcarbamoyladenylate + adenosine(37) in tRNA = N(6)-L-threonylcarbamoyladenosine(37) in tRNA + AMP + H(+). Required for the formation of a threonylcarbamoyl group on adenosine at position 37 (t(6)A37) in tRNAs that read codons beginning with adenine. Is involved in the transfer of the threonylcarbamoyl moiety of threonylcarbamoyl-AMP (TC-AMP) to the N6 group of A37, together with TsaE and TsaB. TsaD likely plays a direct catalytic role in this reaction. The sequence is that of tRNA N6-adenosine threonylcarbamoyltransferase from Yersinia pseudotuberculosis serotype I (strain IP32953).